Reading from the N-terminus, the 749-residue chain is Transcription factor RFX3 (749 aa).

The RFX-type winged-helix DNA-binding region spans 183 to 258 (HLQWLLDNYE…YHYYGIRVKP (76 aa)).

The protein belongs to the RFX family.

The protein resides in the nucleus. In terms of biological role, transcription factor required for ciliogenesis and islet cell differentiation during endocrine pancreas development. In Xenopus tropicalis (Western clawed frog), this protein is Transcription factor RFX3 (rfx3).